The primary structure comprises 195 residues: ATP-dependent Clp protease proteolytic subunit 2 (195 aa).

Ser-92 (nucleophile) is an active-site residue. The active site involves His-117.

It belongs to the peptidase S14 family. In terms of assembly, fourteen ClpP subunits assemble into 2 heptameric rings which stack back to back to give a disk-like structure with a central cavity, resembling the structure of eukaryotic proteasomes.

It is found in the cytoplasm. The catalysed reaction is Hydrolysis of proteins to small peptides in the presence of ATP and magnesium. alpha-casein is the usual test substrate. In the absence of ATP, only oligopeptides shorter than five residues are hydrolyzed (such as succinyl-Leu-Tyr-|-NHMec, and Leu-Tyr-Leu-|-Tyr-Trp, in which cleavage of the -Tyr-|-Leu- and -Tyr-|-Trp bonds also occurs).. Its function is as follows. Cleaves peptides in various proteins in a process that requires ATP hydrolysis. Has a chymotrypsin-like activity. Plays a major role in the degradation of misfolded proteins. The polypeptide is ATP-dependent Clp protease proteolytic subunit 2 (Rhodococcus jostii (strain RHA1)).